Here is a 422-residue protein sequence, read N- to C-terminus: SH2 domain-containing protein 4A (422 aa).

Residues Ser117 and Ser123 each carry the phosphoserine modification. 2 disordered regions span residues 141–190 and 202–282; these read PQNV…EDEK and SEWQ…VIRT. Basic and acidic residues-rich tracts occupy residues 163–190 and 212–231; these read TKKD…EDEK and KAAD…DYKR. The residue at position 233 (Ser233) is a Phosphoserine. Residues 316–408 form the SH2 domain; that stretch reads WFHGILTLKK…LGKELLLFPC (93 aa).

Interacts with ESR1.

Its subcellular location is the cytoplasm. In terms of biological role, inhibits estrogen-induced cell proliferation by competing with PLCG for binding to ESR1, blocking the effect of estrogen on PLCG and repressing estrogen-induced proliferation. May play a role in T-cell development and function. The protein is SH2 domain-containing protein 4A (Sh2d4a) of Rattus norvegicus (Rat).